The primary structure comprises 148 residues: Calcium-permeable cation-selective channel WeiTsing (148 aa).

Residues M1–S25 are Cytoplasmic-facing. The helical transmembrane segment at A26–V46 threads the bilayer. The Lumenal portion of the chain corresponds to S47–S51. A helical membrane pass occupies residues V52–V72. The Cytoplasmic segment spans residues L73–R90. Residues L91–V110 traverse the membrane as a helical segment. The Lumenal segment spans residues V111–S116. A helical membrane pass occupies residues I117 to L133. Topologically, residues E134 to V148 are cytoplasmic.

In terms of assembly, forms pentamers with a central pore to produce an ion channel.

The protein localises to the endoplasmic reticulum membrane. It catalyses the reaction Ca(2+)(in) = Ca(2+)(out). The catalysed reaction is Na(+)(in) = Na(+)(out). Functionally, calcium-permeable cation-selective channel conferring a broad-spectrum clubroot resistance by supporting cytosolic Ca(2+) increase in root pericycle cells. Triggers immunity toward fungal pathogens such as Plasmodiophora brassicae (Pb) and induces defenses. Also permeable to sodium ion Na(+) and possibly other cations. The protein is Calcium-permeable cation-selective channel WeiTsing of Arabidopsis thaliana (Mouse-ear cress).